The chain runs to 338 residues: DNA-directed RNA polymerase subunit alpha (338 aa).

Residues 1-234 (MIHKNWAELI…DQLSIFVNFD (234 aa)) form an alpha N-terminal domain (alpha-NTD) region. The tract at residues 250-338 (FNPLLLKKVD…DLAKKFEDAF (89 aa)) is alpha C-terminal domain (alpha-CTD).

This sequence belongs to the RNA polymerase alpha chain family. In terms of assembly, homodimer. The RNAP catalytic core consists of 2 alpha, 1 beta, 1 beta' and 1 omega subunit. When a sigma factor is associated with the core the holoenzyme is formed, which can initiate transcription.

It catalyses the reaction RNA(n) + a ribonucleoside 5'-triphosphate = RNA(n+1) + diphosphate. DNA-dependent RNA polymerase catalyzes the transcription of DNA into RNA using the four ribonucleoside triphosphates as substrates. This is DNA-directed RNA polymerase subunit alpha from Ruegeria pomeroyi (strain ATCC 700808 / DSM 15171 / DSS-3) (Silicibacter pomeroyi).